The sequence spans 417 residues: Mast cell carboxypeptidase A (417 aa).

A signal peptide spans 1–15 (MRFFLLMAVIYTTLA). Positions 16–109 (IAPVHFDREK…IEKQFDVKDE (94 aa)) are cleaved as a propeptide — activation peptide. Positions 118-412 (KYNDWDKIVS…LSVKFIAKYI (295 aa)) constitute a Peptidase M14 domain. 2 disulfides stabilise this stretch: Cys-173/Cys-186 and Cys-245/Cys-268. Residues His-176 and Glu-179 each contribute to the Zn(2+) site. Position 304 (His-304) interacts with Zn(2+). Glu-378 (proton donor/acceptor) is an active-site residue.

It belongs to the peptidase M14 family. The cofactor is Zn(2+).

It is found in the cytoplasmic vesicle. The protein resides in the secretory vesicle. It carries out the reaction Release of a C-terminal amino acid, but little or no action with -Asp, -Glu, -Arg, -Lys or -Pro.. The chain is Mast cell carboxypeptidase A (Cpa3) from Mus musculus (Mouse).